Consider the following 323-residue polypeptide: Methionine adenosyltransferase 2 subunit beta (323 aa).

NADP(+)-binding positions include Thr-26 to Leu-29, Tyr-49 to Arg-51, Asn-60 to Leu-61, Cys-82, Arg-86, Tyr-146, and Leu-172. Positions Leu-308–His-323 are required for interaction with MAT2A.

It belongs to the dTDP-4-dehydrorhamnose reductase family. MAT2B subfamily. In terms of assembly, heterotrimer; composed of a catalytic mat2a homodimer that binds one regulatory mat2b chain. Heterohexamer; composed of a central, catalytic mat2a homotetramer flanked on either side by a regulatory mat2b chain. NADP binding increases the affinity for mat2a.

It functions in the pathway amino-acid biosynthesis; S-adenosyl-L-methionine biosynthesis; S-adenosyl-L-methionine from L-methionine: step 1/1. Regulatory subunit of S-adenosylmethionine synthetase 2, an enzyme that catalyzes the formation of S-adenosylmethionine from methionine and ATP. Regulates MAT2A catalytic activity by changing its kinetic properties, increasing its affinity for L-methionine. Can bind NADP (in vitro). The protein is Methionine adenosyltransferase 2 subunit beta (mat2b) of Danio rerio (Zebrafish).